A 142-amino-acid polypeptide reads, in one-letter code: Large ribosomal subunit protein uL11 (142 aa).

It belongs to the universal ribosomal protein uL11 family. Part of the ribosomal stalk of the 50S ribosomal subunit. Interacts with L10 and the large rRNA to form the base of the stalk. L10 forms an elongated spine to which L12 dimers bind in a sequential fashion forming a multimeric L10(L12)X complex. Post-translationally, one or more lysine residues are methylated.

Functionally, forms part of the ribosomal stalk which helps the ribosome interact with GTP-bound translation factors. The polypeptide is Large ribosomal subunit protein uL11 (Bartonella bacilliformis (strain ATCC 35685 / KC583 / Herrer 020/F12,63)).